Reading from the N-terminus, the 663-residue chain is UvrABC system protein B (663 aa).

Positions 31 to 271 constitute a Helicase ATP-binding domain; sequence DNIEGGEKAQ…EQSISKIQAE (241 aa). ATP is bound at residue 44-51; it reads GATGTGKT. The Beta-hairpin motif lies at 97–120; it reads YYDYYQPEAYVPSSDTYIEKDSSV. One can recognise a Helicase C-terminal domain in the interval 435–601; it reads QMDDLLGEIN…TIKKDIRDLI (167 aa). Residues 627–662 form the UVR domain; it reads QEAIKQLQKNMQEAAELLDFELAAQLRDLILELKAM.

Belongs to the UvrB family. As to quaternary structure, forms a heterotetramer with UvrA during the search for lesions. Interacts with UvrC in an incision complex.

It localises to the cytoplasm. The UvrABC repair system catalyzes the recognition and processing of DNA lesions. A damage recognition complex composed of 2 UvrA and 2 UvrB subunits scans DNA for abnormalities. Upon binding of the UvrA(2)B(2) complex to a putative damaged site, the DNA wraps around one UvrB monomer. DNA wrap is dependent on ATP binding by UvrB and probably causes local melting of the DNA helix, facilitating insertion of UvrB beta-hairpin between the DNA strands. Then UvrB probes one DNA strand for the presence of a lesion. If a lesion is found the UvrA subunits dissociate and the UvrB-DNA preincision complex is formed. This complex is subsequently bound by UvrC and the second UvrB is released. If no lesion is found, the DNA wraps around the other UvrB subunit that will check the other stand for damage. In Streptococcus equi subsp. zooepidemicus (strain H70), this protein is UvrABC system protein B.